Reading from the N-terminus, the 63-residue chain is uncharacterized protein (63 aa).

Basic and acidic residues predominate over residues 1 to 17 (MRYTDSRKLTPETDANH). A disordered region spans residues 1–32 (MRYTDSRKLTPETDANHKTASPQPIRRISSQT). Residues 18 to 32 (KTASPQPIRRISSQT) are compositionally biased toward polar residues.

It to Y.enterocolitica HemP.

This is an uncharacterized protein from Escherichia coli (strain K12).